We begin with the raw amino-acid sequence, 108 residues long: uncharacterized protein (108 aa).

This is an uncharacterized protein from Saccharolobus islandicus (Sulfolobus islandicus).